We begin with the raw amino-acid sequence, 294 residues long: Elongation factor Ts (294 aa).

An involved in Mg(2+) ion dislocation from EF-Tu region spans residues 80-83 (TDFV).

It belongs to the EF-Ts family.

Its subcellular location is the cytoplasm. Functionally, associates with the EF-Tu.GDP complex and induces the exchange of GDP to GTP. It remains bound to the aminoacyl-tRNA.EF-Tu.GTP complex up to the GTP hydrolysis stage on the ribosome. This Polynucleobacter necessarius subsp. necessarius (strain STIR1) protein is Elongation factor Ts.